Here is a 380-residue protein sequence, read N- to C-terminus: Cytochrome b (380 aa).

The next 4 membrane-spanning stretches (helical) occupy residues 34–54 (FGSL…LLAA), 78–99 (WLIR…YLHI), 114–134 (WNTG…GYVL), and 179–199 (FFAL…IHLT). Heme b-binding residues include H84 and H98. Positions 183 and 197 each coordinate heme b. H202 lines the a ubiquinone pocket. The next 4 membrane-spanning stretches (helical) occupy residues 227-247 (LKDI…ALFS), 289-309 (LGGV…PFLH), 321-341 (LSQL…WVGS), and 348-368 (FIII…VLFP).

Belongs to the cytochrome b family. In terms of assembly, the cytochrome bc1 complex contains 11 subunits: 3 respiratory subunits (MT-CYB, CYC1 and UQCRFS1), 2 core proteins (UQCRC1 and UQCRC2) and 6 low-molecular weight proteins (UQCRH/QCR6, UQCRB/QCR7, UQCRQ/QCR8, UQCR10/QCR9, UQCR11/QCR10 and a cleavage product of UQCRFS1). This cytochrome bc1 complex then forms a dimer. The cofactor is heme b.

Its subcellular location is the mitochondrion inner membrane. In terms of biological role, component of the ubiquinol-cytochrome c reductase complex (complex III or cytochrome b-c1 complex) that is part of the mitochondrial respiratory chain. The b-c1 complex mediates electron transfer from ubiquinol to cytochrome c. Contributes to the generation of a proton gradient across the mitochondrial membrane that is then used for ATP synthesis. This is Cytochrome b (MT-CYB) from Pharomachrus antisianus (Crested quetzal).